The chain runs to 5405 residues: IgGFc-binding protein (5405 aa).

An N-terminal signal peptide occupies residues 1–23; that stretch reads MGALWSWWILWAGATLLWGLTQE. Positions 24–450 are igGFc-binding; it reads ASVDLKNTGR…EPSCEGMQCA (427 aa). N-linked (GlcNAc...) asparagine glycosylation is found at N75 and N91. A VWFD 1 domain is found at 470 to 650; the sequence is AVCRAQGDPH…KLDDGDYLCE (181 aa). Disulfide bonds link C472–C611 and C494–C649. The TIL 1 domain maps to 745–799; the sequence is CPANSRYELCGPACPTSCNGAAAPSNCSGRPCVEGCVCLPGFVASGGACVPASSC. The VWFD 2 domain occupies 862–1041; sequence GTCQGSGDPH…WQEETRPGCG (180 aa). 2 disulfide bridges follow: C864–C1003 and C886–C1040. In terms of domain architecture, TIL 2 spans 1136-1189; the sequence is CPPHSHYEACSYGCPLSCGDLPVPGGCGSECHEGCVCDEGFALSGESCLPLASC. The region spanning 1250–1429 is the VWFD 3 domain; that stretch reads STCQASGDPH…EEVVPDSPCL (180 aa). Disulfide bonds link C1252–C1390 and C1274–C1428. N1317 carries N-linked (GlcNAc...) (complex) asparagine glycosylation. A TIL 3 domain is found at 1532 to 1585; it reads CPPNSHYELCADTCSLGCSALSAPPQCQDGCAEGCQCDSGFLYNGQACVPIQQC. In terms of domain architecture, VWFD 4 spans 1671–1854; it reads ATCWLWGDPH…RAPGWDPLCW (184 aa). Disulfide bonds link C1673/C1815, C1695/C1853, and C1704/C1812. Residue N1743 is glycosylated (N-linked (GlcNAc...) asparagine). The region spanning 1950–2007 is the TIL 4 domain; it reads CPENSHYEVCGSPCPASCPSPAPLTTPAVCEGPCVEGCQCDAGFVLSADRCVPLNNGC. Residues 2070–2253 enclose the VWFD 5 domain; sequence AECQAWGDPH…VSKPCPSPCT (184 aa). 2 disulfide bridges follow: C2072–C2211 and C2094–C2252. Residue N2138 is glycosylated (N-linked (GlcNAc...) asparagine). Positions 2337 to 2390 constitute a TIL 5 domain; that stretch reads CPAHSHYELCGDSCPGSCPSLSAPEGCESACREGCVCDAGFVLSGDTCVPVGQC. The region spanning 2451–2630 is the VWFD 6 domain; sequence TTCQASGDPH…EEVVPDSPCL (180 aa). Intrachain disulfides connect C2453–C2591 and C2475–C2629. The N-linked (GlcNAc...) asparagine glycan is linked to N2518. Residues 2733–2786 enclose the TIL 6 domain; that stretch reads CPQNSHYELCADTCSLGCSALSAPLQCPDGCAEGCQCDSGFLYNGQACVPIQQC. In terms of domain architecture, VWFD 7 spans 2872–3055; that stretch reads ATCWLWGDPH…RAPGWDPLCW (184 aa). Intrachain disulfides connect C2874–C3016, C2896–C3054, and C2905–C3013. Residues 3151–3208 form the TIL 7 domain; sequence CPENSHYEVCGPPCPASCPSPAPLTTPAVCEGPCVEGCQCDAGFVLSADRCVPLNNGC. The region spanning 3271 to 3454 is the VWFD 8 domain; it reads AECQAWGDPH…VSKPCPSPCT (184 aa). 2 cysteine pairs are disulfide-bonded: C3273/C3412 and C3295/C3453. Residues 3538–3591 enclose the TIL 8 domain; sequence CPAHSHYELCGDSCPGSCPSLSAPEGCESACREGCVCDAGFVLSGDTCVPVGQC. Positions 3652-3831 constitute a VWFD 9 domain; that stretch reads TTCQASGDPH…EEVVPDSPCL (180 aa). 2 disulfides stabilise this stretch: C3654/C3792 and C3676/C3830. The N-linked (GlcNAc...) asparagine glycan is linked to N3719. Positions 3934–3987 constitute a TIL 9 domain; it reads CPQNSHYELCADTCSLGCSALSAPLQCPDGCAEGCQCDSGFLYNGQACVPIQQC. A VWFD 10 domain is found at 4073-4256; sequence ATCWLWGDPH…RAPGWDPLCW (184 aa). Disulfide bonds link C4075–C4217, C4097–C4255, and C4106–C4214. N-linked (GlcNAc...) asparagine glycosylation occurs at N4145. The region spanning 4352-4409 is the TIL 10 domain; sequence CPENSHYEVCGPPCPASCPSPAPLTTPAVCEGPCVEGCQCDAGFVLSADRCVPLNNGC. In terms of domain architecture, VWFD 11 spans 4472 to 4655; the sequence is AECQAWGDPH…VSKPCPSPCT (184 aa). 2 disulfides stabilise this stretch: C4474–C4613 and C4496–C4654. N4540 carries N-linked (GlcNAc...) asparagine glycosylation. One can recognise a TIL 11 domain in the interval 4739–4792; that stretch reads CPAHSHYELCGDSCPVSCPSLSAPEGCESACREGCVCDAGFVLSGDTCVPVGQC. The 172-residue stretch at 4854-5025 folds into the VWFD 12 domain; it reads GRCLANGGIH…RAPGSSKGCG (172 aa). 2 disulfides stabilise this stretch: C4856–C4986 and C4878–C5024. In terms of domain architecture, TIL 12 spans 5121-5174; sequence CPAHSHYSICTRTCQGSCAALSGLTGCTTRCFEGCECDDRFLLSQGVCIPVQDC. One can recognise a VWFD 13 domain in the interval 5233-5404; sequence GLCVLSVGAN…WRAQDFSPCY (172 aa). A disulfide bridge connects residues C5235 and C5372.

Interacts with the Fc portion of IgG and with MUC2. As to expression, mainly expressed in placenta and colon epithelium. Expressed in thyroid, and down-regulated in thyroid carcinomas. Present in serum, with higher levels in patients with various autoimmune diseases (at protein level).

Its subcellular location is the secreted. In terms of biological role, may be involved in the maintenance of the mucosal structure as a gel-like component of the mucosa. This is IgGFc-binding protein (FCGBP) from Homo sapiens (Human).